The sequence spans 172 residues: Large ribosomal subunit protein uL10 (172 aa).

Belongs to the universal ribosomal protein uL10 family. As to quaternary structure, part of the ribosomal stalk of the 50S ribosomal subunit. The N-terminus interacts with L11 and the large rRNA to form the base of the stalk. The C-terminus forms an elongated spine to which L12 dimers bind in a sequential fashion forming a multimeric L10(L12)X complex.

Forms part of the ribosomal stalk, playing a central role in the interaction of the ribosome with GTP-bound translation factors. The sequence is that of Large ribosomal subunit protein uL10 from Prosthecochloris aestuarii (strain DSM 271 / SK 413).